The following is a 205-amino-acid chain: Dr1-associated corepressor (205 aa).

The region spanning Pro14 to Glu77 is the Histone-fold domain. A disordered region spans residues Pro91–Ser205. The segment covering Glu98 to Ala108 has biased composition (basic and acidic residues). The segment covering Pro114 to Gly125 has biased composition (gly residues). The segment covering Ser138–Thr155 has biased composition (acidic residues). Over residues Pro184 to Ser193 the composition is skewed to pro residues. Positions Pro195–Ser205 are enriched in acidic residues.

This sequence belongs to the NC2 alpha/DRAP1 family. Heterodimer with DR1. Binds BTAF1. Phosphorylation reduces DNA binding, but has no effect on heterodimerization and TBP binding. In terms of tissue distribution, ubiquitous. Highly expressed in adult testis, heart, skeletal muscle, pancreas and brain, and in fetal brain, liver and kidney.

Its subcellular location is the nucleus. Functionally, the association of the DR1/DRAP1 heterodimer with TBP results in a functional repression of both activated and basal transcription of class II genes. This interaction precludes the formation of a transcription-competent complex by inhibiting the association of TFIIA and/or TFIIB with TBP. Can bind to DNA on its own. The sequence is that of Dr1-associated corepressor (DRAP1) from Homo sapiens (Human).